Here is a 351-residue protein sequence, read N- to C-terminus: MIVQRVVLNSRPGKNGHPVAENFRVEEVNLPDCVNEGQVQVRTLYLSVDPYMRCRMNEDTGSDYITPWQLSQVVDGGGVGIIEESKHTNFMKGDFVTSFYWPWQTKVILDGNILEKVDPQLVDGHLSYFLGAIGMPGLTSLIGVQEKGHITAGSNQTMVVSGAAGACGSLAGQIGRLLGCSRVVGICGTPEKCLFLTSELGFDAAINYKEGNVAEQLHKLCPAGVDVYFDNVGGDISDTVISQMNQNSHIILCGQISQYNKDVPYPPPLPPAIEAIQKERNITRERFLVLNYKDKFEFGILQLSQWFKEGKLKIKETMINGLENMGAAFQSMMTGGNIGKQIVCISGDTSL.

Residue 99–100 (FY) participates in substrate binding. NADP(+) is bound by residues 165 to 168 (GACG), Lys192, Tyr208, Asn231, 253 to 259 (CGQISQY), 287 to 289 (FLV), and Asn337. 288–290 (LVL) contributes to the substrate binding site.

It belongs to the NADP-dependent oxidoreductase L4BD family. As to quaternary structure, monomer.

The protein resides in the cytoplasm. The catalysed reaction is 13,14-dihydro-15-oxo-prostaglandin E2 + NAD(+) = 15-oxoprostaglandin E2 + NADH + H(+). It carries out the reaction 13,14-dihydro-15-oxo-prostaglandin E2 + NADP(+) = 15-oxoprostaglandin E2 + NADPH + H(+). It catalyses the reaction 13,14-dihydro-15-oxo-PGF2alpha + NADP(+) = 15-oxoprostaglandin F2alpha + NADPH + H(+). The enzyme catalyses 13,14-dihydro-15-oxo-prostaglandin E1 + NADP(+) = 15-oxoprostaglandin E1 + NADPH + H(+). The catalysed reaction is 13,14-dihydro-15-oxo-prostaglandin F1alpha + NADP(+) = 15-oxoprostaglandin F1alpha + NADPH + H(+). Functions as 15-oxo-prostaglandin 13-reductase and acts on 15-keto-PGE1, 15-keto-PGE2, 15-keto-PGE1-alpha and 15-keto-PGE2-alpha with highest activity towards 15-keto-PGE2. Overexpression represses transcriptional activity of PPARG and inhibits adipocyte differentiation. The sequence is that of Prostaglandin reductase 2 (PTGR2) from Bos taurus (Bovine).